The following is a 133-amino-acid chain: MPTIQQLIRSARKKITKKTKSPALKSCPQRRGICLRVYTVTPKKPNSALRKVARVRLTTGFEVTAYIPGVGHNLQEHAVVLVRGGRVKDLPGVRYHIVRGSLDTAGVKNRVQSRSKYGVKMGSKTAAKTAGKK.

The protein belongs to the universal ribosomal protein uS12 family. In terms of assembly, part of the 30S ribosomal subunit.

The protein localises to the plastid. Its subcellular location is the chloroplast. Functionally, with S4 and S5 plays an important role in translational accuracy. Located at the interface of the 30S and 50S subunits. This Chlamydomonas reinhardtii (Chlamydomonas smithii) protein is Small ribosomal subunit protein uS12c (rps12).